A 118-amino-acid chain; its full sequence is Large ribosomal subunit protein bL19 (118 aa).

This sequence belongs to the bacterial ribosomal protein bL19 family.

Its function is as follows. This protein is located at the 30S-50S ribosomal subunit interface and may play a role in the structure and function of the aminoacyl-tRNA binding site. The protein is Large ribosomal subunit protein bL19 of Salinibacter ruber (strain DSM 13855 / M31).